The chain runs to 1289 residues: SH3 domain and tetratricopeptide repeat-containing protein 2 (1289 aa).

SH3 domains are found at residues 176–239 (EGHF…PLPV) and 267–330 (IGRG…LDSC). The disordered stretch occupies residues 393 to 442 (SQPEGFREARSGGTWMERQTIGSRRSSGSGDSSPEEDELISASSDSYHLP). A compositionally biased stretch (low complexity) spans 414–424 (GSRRSSGSGDS). TPR repeat units follow at residues 529–562 (ARLC…LDGA), 758–791 (RTLC…GKLL), 837–870 (GVVH…AREM), 1002–1038 (GQLL…FVDL), 1085–1119 (LKLY…LARR), 1120–1153 (MKAL…ATLA), 1167–1200 (LVAF…CPPW), and 1211–1245 (AKVY…AVLM).

The protein is SH3 domain and tetratricopeptide repeat-containing protein 2 (Sh3tc2) of Mus musculus (Mouse).